Consider the following 529-residue polypeptide: Bifunctional purine biosynthesis protein PurH (529 aa).

An MGS-like domain is found at 8 to 158; that stretch reads PSAPDLVAPK…KNHGYVAVCT (151 aa).

The protein belongs to the PurH family.

It catalyses the reaction (6R)-10-formyltetrahydrofolate + 5-amino-1-(5-phospho-beta-D-ribosyl)imidazole-4-carboxamide = 5-formamido-1-(5-phospho-D-ribosyl)imidazole-4-carboxamide + (6S)-5,6,7,8-tetrahydrofolate. It carries out the reaction IMP + H2O = 5-formamido-1-(5-phospho-D-ribosyl)imidazole-4-carboxamide. It participates in purine metabolism; IMP biosynthesis via de novo pathway; 5-formamido-1-(5-phospho-D-ribosyl)imidazole-4-carboxamide from 5-amino-1-(5-phospho-D-ribosyl)imidazole-4-carboxamide (10-formyl THF route): step 1/1. The protein operates within purine metabolism; IMP biosynthesis via de novo pathway; IMP from 5-formamido-1-(5-phospho-D-ribosyl)imidazole-4-carboxamide: step 1/1. The chain is Bifunctional purine biosynthesis protein PurH from Caulobacter vibrioides (strain ATCC 19089 / CIP 103742 / CB 15) (Caulobacter crescentus).